Reading from the N-terminus, the 315-residue chain is Apolipoprotein F (315 aa).

An N-terminal signal peptide occupies residues 1-24 (MHSLRLILMSIQLLCYLLLCPVDA). Residues 25 to 154 (TSHGEATSVS…EQPGPKRAKR (130 aa)) constitute a propeptide that is removed on maturation.

Belongs to the apolipoprotein F family. In terms of tissue distribution, liver.

Its subcellular location is the secreted. In terms of biological role, minor apolipoprotein that associates with LDL. Inhibits cholesteryl ester transfer protein (CETP) activity and appears to be an important regulator of cholesterol transport. Also associates to a lesser degree with VLDL, Apo-AI and Apo-AII. This chain is Apolipoprotein F (Apof), found in Mus musculus (Mouse).